Reading from the N-terminus, the 242-residue chain is Probable septum site-determining protein MinC (242 aa).

A compositionally biased stretch (basic and acidic residues) spans 120–135 (APKKVEEKPAEPEHKP). The interval 120–144 (APKKVEEKPAEPEHKPSRIVTSPVR) is disordered.

Belongs to the MinC family. As to quaternary structure, interacts with MinD and FtsZ.

Its function is as follows. Cell division inhibitor that blocks the formation of polar Z ring septums. Rapidly oscillates between the poles of the cell to destabilize FtsZ filaments that have formed before they mature into polar Z rings. Prevents FtsZ polymerization. This is Probable septum site-determining protein MinC from Ectopseudomonas mendocina (strain ymp) (Pseudomonas mendocina).